The primary structure comprises 852 residues: Protein mono-ADP-ribosyltransferase PARP8 (852 aa).

Disordered stretches follow at residues 113–134 (NGEE…NDSE) and 289–310 (SPSY…EQDG). The segment covering 123–134 (VEEDSEGDNDSE) has biased composition (acidic residues). An ADP-ribosylcysteine mark is found at Cys-332, Cys-366, Cys-375, and Cys-394. Positions 615 to 842 (EMTQAPYLEI…QEGGIHKEIL (228 aa)) constitute a PARP catalytic domain. Positions 748 to 775 (QKVSSKDEPASSSKSSNASQSQKKGQQS) are disordered. A compositionally biased stretch (low complexity) spans 757 to 775 (ASSSKSSNASQSQKKGQQS).

The protein belongs to the ARTD/PARP family. Post-translationally, auto-mono-ADP-ribosylated.

The catalysed reaction is L-cysteinyl-[protein] + NAD(+) = S-(ADP-D-ribosyl)-L-cysteinyl-[protein] + nicotinamide + H(+). In terms of biological role, mono-ADP-ribosyltransferase that mediates mono-ADP-ribosylation of target proteins. This Mus musculus (Mouse) protein is Protein mono-ADP-ribosyltransferase PARP8.